The sequence spans 215 residues: Probable phosphoglycerate mutase GpmB (215 aa).

Substrate is bound by residues 8-15, 21-22, R58, R60, 82-85, 104-105, and 151-152; these read RHGETQWN, QG, ELNM, RR, and GI. H9 functions as the Tele-phosphohistidine intermediate in the catalytic mechanism. Catalysis depends on E82, which acts as the Proton donor/acceptor.

Belongs to the phosphoglycerate mutase family. GpmB subfamily.

It catalyses the reaction (2R)-2-phosphoglycerate = (2R)-3-phosphoglycerate. Its pathway is carbohydrate degradation; glycolysis; pyruvate from D-glyceraldehyde 3-phosphate: step 3/5. In Escherichia coli O1:K1 / APEC, this protein is Probable phosphoglycerate mutase GpmB.